Consider the following 171-residue polypeptide: Galectin-related protein (171 aa).

One can recognise a Galectin domain in the interval 38–170 (PFCGHIKGGM…INGDLQLTKL (133 aa)).

Functionally, does not bind lactose, and may not bind carbohydrates. The protein is Galectin-related protein (lgalsl) of Xenopus tropicalis (Western clawed frog).